The sequence spans 1123 residues: Phytochrome 1 (1123 aa).

The segment covering 1–15 (MSTPKKTYSSTSSAK) has biased composition (low complexity). The disordered stretch occupies residues 1 to 20 (MSTPKKTYSSTSSAKSKAHS). Residues 216-395 (DIGLLCDTVV…VFGLQLNMEV (180 aa)) enclose the GAF domain. C321 contacts phytochromobilin. PAS domains follow at residues 610 to 681 (VANE…LRGE) and 744 to 815 (DYKT…TKFM). The Histidine kinase domain maps to 895–1115 (YIRQEIKNPL…VVNVELPMAQ (221 aa)).

The protein belongs to the phytochrome family. In terms of assembly, homodimer. Contains one covalently linked phytochromobilin chromophore.

The protein resides in the cytoplasm. In terms of biological role, regulatory photoreceptor which exists in two forms that are reversibly interconvertible by light: the Pr form that absorbs maximally in the red region of the spectrum and the Pfr form that absorbs maximally in the far-red region. Photoconversion of Pr to Pfr induces an array of morphogenetic responses, whereas reconversion of Pfr to Pr cancels the induction of those responses. Pfr controls the expression of a number of nuclear genes including those encoding the small subunit of ribulose-bisphosphate carboxylase, chlorophyll A/B binding protein, protochlorophyllide reductase, rRNA, etc. It also controls the expression of its own gene(s) in a negative feedback fashion. Mediates chloroplast avoidance movement in cytoplasm. The polypeptide is Phytochrome 1 (PHY1) (Physcomitrium patens (Spreading-leaved earth moss)).